Consider the following 144-residue polypeptide: Glycine-rich protein HC1 (144 aa).

The chain crosses the membrane as a helical span at residues 5 to 25 (IFLLLGLSIAFAILISSEVAA). 11 consecutive repeat copies span residues 37-42 (GYNNGG), 43-48 (GYHNGG), 50-55 (GYNNGG), 56-61 (GYHNGG), 63-68 (GYNNGG), 69-74 (GYHNGG), 76-81 (GYNNGG), 82-87 (GYHNGG), 89-94 (GYNNGG), 102-107 (GYNNGG), and 108-113 (GYHGGG). Residues 37 to 113 (GYNNGGGYHN…NNGGGYHGGG (77 aa)) are 11 X 6 AA tandem repeats of G-Y-[NH]-N-G -G.

This sequence belongs to the GRP family.

It is found in the membrane. This chain is Glycine-rich protein HC1, found in Oxybasis rubra (Red goosefoot).